The primary structure comprises 138 residues: Small ribosomal subunit protein uS17 (138 aa).

Composition is skewed to basic and acidic residues over residues 1-18 (MSEEERNRGAEPEERAEA) and 43-55 (AFDRDAGKVQKDT). The segment at 1-62 (MSEEERNRGA…KDTRRGRRKE (62 aa)) is disordered.

The protein belongs to the universal ribosomal protein uS17 family. Part of the 30S ribosomal subunit.

One of the primary rRNA binding proteins, it binds specifically to the 5'-end of 16S ribosomal RNA. The polypeptide is Small ribosomal subunit protein uS17 (Rubrobacter xylanophilus (strain DSM 9941 / JCM 11954 / NBRC 16129 / PRD-1)).